The chain runs to 237 residues: MRPSNRTPAQSRPVTITRQFTAHAEGSVLVEFGDTKVLCTASFEEGVPRFLKGQGQGWVTAEYGMLPRSTHSRMNREAARGKQSGRTQEIQRLIGRSLRAAVDMKLLGENTIVIDCDVIQADGGTRTAAITGACVALVDALNWARGKGILKTNPLKFLIAAVSVGIYKGEPICDLEYIEDSAAETDMNVVMTETGKMIEIQGTAEGEPFTHEELLSLLDLAKHGIREIVDIQKASLS.

Phosphate is bound by residues R86 and 124–126 (GTR).

This sequence belongs to the RNase PH family. In terms of assembly, homohexameric ring arranged as a trimer of dimers.

It catalyses the reaction tRNA(n+1) + phosphate = tRNA(n) + a ribonucleoside 5'-diphosphate. In terms of biological role, phosphorolytic 3'-5' exoribonuclease that plays an important role in tRNA 3'-end maturation. Removes nucleotide residues following the 3'-CCA terminus of tRNAs; can also add nucleotides to the ends of RNA molecules by using nucleoside diphosphates as substrates, but this may not be physiologically important. Probably plays a role in initiation of 16S rRNA degradation (leading to ribosome degradation) during starvation. This Shewanella piezotolerans (strain WP3 / JCM 13877) protein is Ribonuclease PH.